Consider the following 449-residue polypeptide: UDP-N-acetylmuramoylalanine--D-glutamate ligase (449 aa).

Position 107–113 (107–113 (GSNGKST)) interacts with ATP.

This sequence belongs to the MurCDEF family.

Its subcellular location is the cytoplasm. The enzyme catalyses UDP-N-acetyl-alpha-D-muramoyl-L-alanine + D-glutamate + ATP = UDP-N-acetyl-alpha-D-muramoyl-L-alanyl-D-glutamate + ADP + phosphate + H(+). The protein operates within cell wall biogenesis; peptidoglycan biosynthesis. Its function is as follows. Cell wall formation. Catalyzes the addition of glutamate to the nucleotide precursor UDP-N-acetylmuramoyl-L-alanine (UMA). This Hydrogenovibrio crunogenus (strain DSM 25203 / XCL-2) (Thiomicrospira crunogena) protein is UDP-N-acetylmuramoylalanine--D-glutamate ligase.